A 505-amino-acid chain; its full sequence is NADH-quinone oxidoreductase subunit N 1 (505 aa).

The next 14 membrane-spanning stretches (helical) occupy residues 18-38 (LIPEIALGCLALLLLVVEMVL), 45-65 (LIATIAIIGQFGILGWVAWDF), 84-104 (YVGQAMRVFFLLSSIFVSILA), 116-136 (IEFYHIVLVATAAMMLLAQAN), 138-158 (FVLFFVALETLTVGLYILVSY), 173-193 (LIMGALSSSLLLFGIVLLYGV), 223-243 (FLAAAGIVLVLSGIAFKIGAF), 271-291 (AGFAILLVLVNSVFGPYWWLV), 292-312 (QPVLVAMAVATILFGNIAALT), 319-339 (LIGLSGVSHAGFLLIGIIASH), 345-365 (VGAVLFYLFAYLLATFAVFGV), 391-411 (FLAAILAVALGSLAGIPPLAG), 429-449 (GLLAVAIVGVVISIYYYFGWI), and 473-493 (VGAAAGVALATLALCSILFGV).

This sequence belongs to the complex I subunit 2 family. As to quaternary structure, NDH-1 is composed of 14 different subunits. Subunits NuoA, H, J, K, L, M, N constitute the membrane sector of the complex.

Its subcellular location is the cell inner membrane. It catalyses the reaction a quinone + NADH + 5 H(+)(in) = a quinol + NAD(+) + 4 H(+)(out). NDH-1 shuttles electrons from NADH, via FMN and iron-sulfur (Fe-S) centers, to quinones in the respiratory chain. The immediate electron acceptor for the enzyme in this species is believed to be ubiquinone. Couples the redox reaction to proton translocation (for every two electrons transferred, four hydrogen ions are translocated across the cytoplasmic membrane), and thus conserves the redox energy in a proton gradient. The sequence is that of NADH-quinone oxidoreductase subunit N 1 from Opitutus terrae (strain DSM 11246 / JCM 15787 / PB90-1).